Consider the following 215-residue polypeptide: Large ribosomal subunit protein uL3 (215 aa).

A disordered region spans residues 136 to 155 (GVSISHRSHGSTGQRQDPGK). Gln151 is modified (N5-methylglutamine).

It belongs to the universal ribosomal protein uL3 family. As to quaternary structure, part of the 50S ribosomal subunit. Forms a cluster with proteins L14 and L19. In terms of processing, methylated by PrmB.

One of the primary rRNA binding proteins, it binds directly near the 3'-end of the 23S rRNA, where it nucleates assembly of the 50S subunit. The polypeptide is Large ribosomal subunit protein uL3 (Rickettsia canadensis (strain McKiel)).